Here is a 1582-residue protein sequence, read N- to C-terminus: Sca1 complex scaffold protein scaA (1582 aa).

Composition is skewed to low complexity over residues Met-1–Thr-14 and Leu-109–Thr-131. Disordered regions lie at residues Met-1–Lys-22 and Gly-108–Lys-147. One copy of the TPR 1 repeat lies at Leu-4–Gly-37. One copy of the TPR 2 repeat lies at Ile-166 to Ile-199. A disordered region spans residues Ile-246–Val-349. Polar residues-rich tracts occupy residues Thr-249–Arg-267, Asn-288–Ile-310, and Ser-318–Gly-332. A Phosphoserine; by PKB modification is found at Ser-359. Positions Arg-400–Gly-600 are gefA and gefH binding. Disordered regions lie at residues Pro-468–Gly-493 and Ser-686–Lys-734. Gly residues-rich tracts occupy residues Gly-478–Gly-493 and Gln-694–Ser-714. Low complexity predominate over residues Gly-715 to Gly-726. A TPR 3 repeat occupies Met-742 to Leu-777. Gly residues predominate over residues Gly-864–Ile-875. Positions Gly-864–Pro-978 are disordered. The span at His-903 to Gly-928 shows a compositional bias: low complexity. A compositionally biased stretch (polar residues) spans Asn-940–Leu-953. The span at Gly-960–Ser-972 shows a compositional bias: low complexity. Residues Phe-1000–Asn-1400 are pppA and pho2B binding. One copy of the TPR 4 repeat lies at Thr-1080–Val-1113.

Component of the Sca1 complex composed of at least gefA, gefH, scaA, phr, and the protein phosphatase 2A subunits pppA and pho2B. Post-translationally, phosphorylated at Ser-359 by PKB and PKBR1 is induced by chemoattractant.

It localises to the cell membrane. Its function is as follows. Component of the Sca1 complex, a regulator of cell motility, chemotaxis and signal relay. The Sca1 complex is recruited to the plasma membrane in a chemoattractant- and F-actin-dependent manner and is enriched at the leading edge of chemotaxing cells where it regulates F-actin dynamics and signal relay by controlling the activation of rasC and the downstream target of rapamycin complex 2 (TORC2)-Akt/protein kinase B (PKB) pathway. ScaA acts as a molecular scaffold, bringing together gefA, gefH and phr with PP2A. This chain is Sca1 complex scaffold protein scaA, found in Dictyostelium discoideum (Social amoeba).